A 108-amino-acid chain; its full sequence is Cyclin-dependent protein kinase inhibitor SMR13 (108 aa).

Functionally, probable cyclin-dependent protein kinase (CDK) inhibitor that functions as a repressor of mitosis in the endoreduplication cell cycle. The chain is Cyclin-dependent protein kinase inhibitor SMR13 from Arabidopsis thaliana (Mouse-ear cress).